The following is a 408-amino-acid chain: Dual-specificity RNA methyltransferase RlmN (408 aa).

Residue Glu120 is the Proton acceptor of the active site. Positions 126–375 (EEGRGTLCIS…IRTPRGRDIL (250 aa)) constitute a Radical SAM core domain. Cysteines 133 and 378 form a disulfide. Residues Cys140, Cys144, and Cys147 each coordinate [4Fe-4S] cluster. S-adenosyl-L-methionine is bound by residues 204 to 205 (GE), Ser236, 258 to 260 (SLH), and Asn335. Cys378 acts as the S-methylcysteine intermediate in catalysis.

Belongs to the radical SAM superfamily. RlmN family. [4Fe-4S] cluster is required as a cofactor.

The protein resides in the cytoplasm. The enzyme catalyses adenosine(2503) in 23S rRNA + 2 reduced [2Fe-2S]-[ferredoxin] + 2 S-adenosyl-L-methionine = 2-methyladenosine(2503) in 23S rRNA + 5'-deoxyadenosine + L-methionine + 2 oxidized [2Fe-2S]-[ferredoxin] + S-adenosyl-L-homocysteine. The catalysed reaction is adenosine(37) in tRNA + 2 reduced [2Fe-2S]-[ferredoxin] + 2 S-adenosyl-L-methionine = 2-methyladenosine(37) in tRNA + 5'-deoxyadenosine + L-methionine + 2 oxidized [2Fe-2S]-[ferredoxin] + S-adenosyl-L-homocysteine. Functionally, specifically methylates position 2 of adenine 2503 in 23S rRNA and position 2 of adenine 37 in tRNAs. m2A2503 modification seems to play a crucial role in the proofreading step occurring at the peptidyl transferase center and thus would serve to optimize ribosomal fidelity. The protein is Dual-specificity RNA methyltransferase RlmN of Rhizobium johnstonii (strain DSM 114642 / LMG 32736 / 3841) (Rhizobium leguminosarum bv. viciae).